Reading from the N-terminus, the 788-residue chain is Auxin response factor 4 (788 aa).

A compositionally biased stretch (acidic residues) spans 1-19; sequence MEFDLNTEIAEVEEEENDD. Positions 1–53 are disordered; that stretch reads MEFDLNTEIAEVEEEENDDVGVGVGGGTRIDKGRLGISPSSSSSCSSGSSSSS. The span at 38 to 53 shows a compositional bias: low complexity; it reads SPSSSSSCSSGSSSSS. Positions 177–279 form a DNA-binding region, TF-B3; that stretch reads FCKTLTASDT…ELRLGIRRAA (103 aa). The disordered stretch occupies residues 413 to 433; the sequence is LSIQSSPRPKRPWAGLLDTTP. The region spanning 665-747 is the PB1 domain; that stretch reads RICTKVHKQG…VVWKIHLYTK (83 aa).

Belongs to the ARF family. Homodimers and heterodimers. In terms of tissue distribution, expressed in the whole plant.

The protein resides in the nucleus. In terms of biological role, auxin response factors (ARFs) are transcriptional factors that bind specifically to the DNA sequence 5'-TGTCTC-3' found in the auxin-responsive promoter elements (AuxREs). Could act as transcriptional activator or repressor. Formation of heterodimers with Aux/IAA proteins may alter their ability to modulate early auxin response genes expression. The protein is Auxin response factor 4 (ARF4) of Arabidopsis thaliana (Mouse-ear cress).